The following is a 168-amino-acid chain: Peptide deformylase (168 aa).

Cysteine 92 and histidine 134 together coordinate Fe cation. Glutamate 135 is an active-site residue. A Fe cation-binding site is contributed by histidine 138.

It belongs to the polypeptide deformylase family. The cofactor is Fe(2+).

It catalyses the reaction N-terminal N-formyl-L-methionyl-[peptide] + H2O = N-terminal L-methionyl-[peptide] + formate. In terms of biological role, removes the formyl group from the N-terminal Met of newly synthesized proteins. Requires at least a dipeptide for an efficient rate of reaction. N-terminal L-methionine is a prerequisite for activity but the enzyme has broad specificity at other positions. The polypeptide is Peptide deformylase (Azotobacter vinelandii (strain DJ / ATCC BAA-1303)).